The sequence spans 115 residues: Mediator of RNA polymerase II transcription subunit 11 (115 aa).

Residues 56-107 (YERLDKSTTQLRKEIQLLDENVGTRLLPINVNKKALGQDTEKMEEQLDLLSA) adopt a coiled-coil conformation.

It belongs to the mediator complex subunit 11 family. Component of the Mediator complex, which is composed of at least 21 subunits that form three structurally distinct submodules. The Mediator head module contains MED6, MED8, MED11, SRB4/MED17, SRB5/MED18, ROX3/MED19, SRB2/MED20 and SRB6/MED22, the middle module contains MED1, MED4, NUT1/MED5, MED7, CSE2/MED9, NUT2/MED10, SRB7/MED21 and SOH1/MED31, and the tail module contains MED2, PGD1/MED3, RGR1/MED14, GAL11/MED15 and SIN4/MED16. The head and the middle modules interact directly with RNA polymerase II, whereas the elongated tail module interacts with gene-specific regulatory proteins. MED11 forms a heterodimer with SRB6/MED22. The MED11/22 heterodimer binds to and stabilizes the central head subunit SRB4/MED17. Interacts with TFIIH subunit RAD3.

It localises to the nucleus. Functionally, component of the Mediator complex, a coactivator involved in the regulated transcription of nearly all RNA polymerase II-dependent genes. Mediator functions as a bridge to convey information from gene-specific regulatory proteins to the basal RNA polymerase II transcription machinery. The Mediator complex, having a compact conformation in its free form, is recruited to promoters by direct interactions with regulatory proteins and serves for the assembly of a functional pre-initiation complex (PIC) with RNA polymerase II and the general transcription factors. The Mediator complex unfolds to an extended conformation and partially surrounds RNA polymerase II, specifically interacting with the unphosphorylated form of the C-terminal domain (CTD) of RNA polymerase II. The Mediator complex dissociates from the RNA polymerase II holoenzyme and stays at the promoter when transcriptional elongation begins. The essential MED11/22 heterodimer specifically functions in promoting stable PIC formation. The sequence is that of Mediator of RNA polymerase II transcription subunit 11 (MED11) from Saccharomyces cerevisiae (strain ATCC 204508 / S288c) (Baker's yeast).